We begin with the raw amino-acid sequence, 280 residues long: Formyltetrahydrofolate deformylase (280 aa).

Positions 8–86 (VLRTICPDQK…RELNPAGRRR (79 aa)) constitute an ACT domain. Residue aspartate 225 is part of the active site.

This sequence belongs to the PurU family.

It carries out the reaction (6R)-10-formyltetrahydrofolate + H2O = (6S)-5,6,7,8-tetrahydrofolate + formate + H(+). Its pathway is purine metabolism; IMP biosynthesis via de novo pathway; formate from 10-formyl-5,6,7,8-tetrahydrofolate: step 1/1. Catalyzes the hydrolysis of 10-formyltetrahydrofolate (formyl-FH4) to formate and tetrahydrofolate (FH4). This Escherichia coli O6:H1 (strain CFT073 / ATCC 700928 / UPEC) protein is Formyltetrahydrofolate deformylase.